The following is a 104-amino-acid chain: Circadian clock oscillator protein KaiB (104 aa).

This sequence belongs to the KaiB family. As to quaternary structure, the KaiABC complex composition changes during the circadian cycle to control KaiC phosphorylation. Complexes KaiC(6), KaiA(2-4):KaiC(6), KaiB(6):KaiC(6) and KaiC(6):KaiB(6):KaiA(12) are among the most important forms, many form cooperatively. Undergoes a major conformational rearrangment; in the free state forms homotetramers as a dimer of dimers. When bound to the CI domain of KaiC switches to a monomeric thioredoxin-fold (KaiB(fs)). KaiB(fs) binds CikA, leading it to dephosphorylate phospho-RpaA.

Key component of the KaiABC oscillator complex, which constitutes the main circadian regulator in cyanobacteria. Complex composition changes during the circadian cycle to control KaiC phosphorylation. KaiA stimulates KaiC autophosphorylation, while KaiB sequesters KaiA, leading to KaiC autodephosphorylation. Phospho-Ser-431 KaiC accumulation triggers binding of KaiB to form the KaiB(6):KaiC(6) complex, leading to changes in output regulators CikA and SasA. KaiB switches to a thioredoxin-like fold (KaiB(fs)) when bound to KaiC. KaiB(6):KaiC(6) formation exposes a site for KaiA binding that sequesters KaiA from KaiC, making the KaiC(6):KaiB(6):KaiA(12) complex that results in KaiC autodephosphorylation. Functionally, a metamorphic protein which reversibly switches between an inactive tetrameric fold and a rare, thioredoxin-like monomeric fold (KaiB(fs)). KaiB(fs) binds phospho-KaiC, KaiA and CikA. KaiA and CikA compete for binding to KaiB(fs), and KaiB(fs) and SasA compete for binding to KaiC, thus the clock oscillator and output signal pathway are tightly coupled. The sequence is that of Circadian clock oscillator protein KaiB from Picosynechococcus sp. (strain ATCC 27264 / PCC 7002 / PR-6) (Agmenellum quadruplicatum).